The chain runs to 180 residues: Putative manganese efflux pump MntP (180 aa).

6 consecutive transmembrane segments (helical) span residues 6–26, 34–54, 67–87, 102–122, 131–151, and 160–180; these read LMAL…GIGL, ILQI…TGWL, AAVI…WAAW, FWGL…AGFT, LLAA…GLVF, and GERA…KLFF.

It belongs to the MntP (TC 9.B.29) family.

The protein resides in the cell membrane. In terms of biological role, probably functions as a manganese efflux pump. The protein is Putative manganese efflux pump MntP of Pelotomaculum thermopropionicum (strain DSM 13744 / JCM 10971 / SI).